We begin with the raw amino-acid sequence, 447 residues long: Tektin-4 (447 aa).

Coiled coils occupy residues 114–143 (KSEL…RALD), 324–348 (KILS…DKEA), and 375–423 (FRLM…TNSL).

Belongs to the tektin family. As to quaternary structure, microtubule inner protein component of sperm flagellar doublet microtubules. In terms of processing, ubiquitinated, leading to its degradation. Deubiquitinated by USP16, promoting its stability.

The protein localises to the cytoplasm. The protein resides in the cytoskeleton. Its subcellular location is the cilium axoneme. It is found in the flagellum axoneme. Microtubule inner protein (MIP) part of the dynein-decorated doublet microtubules (DMTs) in cilia and flagellar axoneme. Forms filamentous polymers in the walls of ciliary and flagellar microtubules. Contributes to normal sperm motility. The sequence is that of Tektin-4 (Tekt4) from Rattus norvegicus (Rat).